Reading from the N-terminus, the 175-residue chain is Calcineurin subunit B (175 aa).

EF-hand domains follow at residues 21–56 (PELM…ANNP), 60–88 (RMIA…FSSK), 90–125 (GRDE…MVGN), and 131–166 (QLQQ…TDIV). Ca(2+) contacts are provided by Asp34, Asp36, Ser38, Ser40, Glu45, Asp66, Asp68, Ser70, Thr72, Glu77, Asp103, Asp105, Asp107, Tyr109, Glu114, Asp144, Asp146, Asp148, Lys150, and Glu155.

The protein belongs to the calcineurin regulatory subunit family. In terms of assembly, composed of a catalytic subunit (A) and a regulatory subunit (B).

Its function is as follows. Regulatory subunit of calcineurin, a calcium-dependent, calmodulin stimulated protein phosphatase. Confers calcium sensitivity. Plays a central role in virulence and antifungal drug action. This Cryptococcus neoformans var. neoformans serotype D (strain B-3501A) (Filobasidiella neoformans) protein is Calcineurin subunit B (CNB1).